The chain runs to 125 residues: C-X-C motif chemokine 9 (125 aa).

Positions 1–22 (MKKSGVLFLLGIILLVLIGVQG) are cleaved as a signal peptide. Intrachain disulfides connect Cys31–Cys58 and Cys33–Cys74. The tract at residues 93-125 (VSQKKKQKNGKKHQKKKVLKVRKSQRSRQKKTT) is disordered. Residues 94-125 (SQKKKQKNGKKHQKKKVLKVRKSQRSRQKKTT) are compositionally biased toward basic residues.

It belongs to the intercrine alpha (chemokine CxC) family.

It is found in the secreted. Cytokine that affects the growth, movement, or activation state of cells that participate in immune and inflammatory response. Chemotactic for activated T-cells. Binds to CXCR3. This Homo sapiens (Human) protein is C-X-C motif chemokine 9 (CXCL9).